A 456-amino-acid polypeptide reads, in one-letter code: Mitochondrial import inner membrane translocase subunit TIM50 (456 aa).

The transit peptide at 1–22 (MSLSKLSQKCFSRHHARTFIRF) directs the protein to the mitochondrion. At 23 to 171 (SSSDFQSLLG…RRKRMERNTR (149 aa)) the chain is on the mitochondrial matrix side. Disordered stretches follow at residues 101–120 (ETEK…AIDE) and 132–165 (EEAA…RRKR). Residues 137–153 (SKTSAPSGSSGDNNDQP) show a composition bias toward polar residues. Residues 172-192 (IGGYVLLGGSVIGFISFCFYY) form a helical membrane-spanning segment. Over 193–456 (GRAQRDEAGN…LFGFRRHASA (264 aa)) the chain is Mitochondrial intermembrane. Positions 247 to 391 (YLQPKYTIVI…VDLAELLKTI (145 aa)) constitute an FCP1 homology domain.

This sequence belongs to the TIM50 family. As to quaternary structure, component of the TIM23 complex at least composed of tim-23, tim-17 and tim-50.

The protein localises to the mitochondrion inner membrane. Essential component of the TIM23 complex, a complex that mediates the translocation of transit peptide-containing proteins across the mitochondrial inner membrane. In Caenorhabditis briggsae, this protein is Mitochondrial import inner membrane translocase subunit TIM50 (scpl-4).